We begin with the raw amino-acid sequence, 329 residues long: Ketol-acid reductoisomerase (NADP(+)) (329 aa).

Residues 2 to 182 (TQLFYDTDAD…GGTRAGILET (181 aa)) form the KARI N-terminal Rossmann domain. Residues 25–28 (YGSQ), Ser51, Ser53, and 83–86 (DEFQ) each bind NADP(+). His108 is a catalytic residue. NADP(+) is bound at residue Gly134. A KARI C-terminal knotted domain is found at 183–328 (NFKEETETDL…KGLRAMFSWL (146 aa)). Asp191, Glu195, Glu227, and Glu231 together coordinate Mg(2+). Ser252 contacts substrate.

This sequence belongs to the ketol-acid reductoisomerase family. The cofactor is Mg(2+).

The catalysed reaction is (2R)-2,3-dihydroxy-3-methylbutanoate + NADP(+) = (2S)-2-acetolactate + NADPH + H(+). It catalyses the reaction (2R,3R)-2,3-dihydroxy-3-methylpentanoate + NADP(+) = (S)-2-ethyl-2-hydroxy-3-oxobutanoate + NADPH + H(+). The protein operates within amino-acid biosynthesis; L-isoleucine biosynthesis; L-isoleucine from 2-oxobutanoate: step 2/4. It participates in amino-acid biosynthesis; L-valine biosynthesis; L-valine from pyruvate: step 2/4. Its function is as follows. Involved in the biosynthesis of branched-chain amino acids (BCAA). Catalyzes an alkyl-migration followed by a ketol-acid reduction of (S)-2-acetolactate (S2AL) to yield (R)-2,3-dihydroxy-isovalerate. In the isomerase reaction, S2AL is rearranged via a Mg-dependent methyl migration to produce 3-hydroxy-3-methyl-2-ketobutyrate (HMKB). In the reductase reaction, this 2-ketoacid undergoes a metal-dependent reduction by NADPH to yield (R)-2,3-dihydroxy-isovalerate. The sequence is that of Ketol-acid reductoisomerase (NADP(+)) from Prochlorococcus marinus subsp. pastoris (strain CCMP1986 / NIES-2087 / MED4).